We begin with the raw amino-acid sequence, 216 residues long: Somatotropin (216 aa).

The N-terminal stretch at 1–26 (MAAGPRNSMLLVFALLSLPWPQEVGA) is a signal peptide. H45 lines the Zn(2+) pocket. C78 and C189 form a disulfide bridge. S131 carries the post-translational modification Phosphoserine. E198 lines the Zn(2+) pocket. C206 and C214 are joined by a disulfide.

Belongs to the somatotropin/prolactin family.

It localises to the secreted. Functionally, plays an important role in growth control. Its major role in stimulating body growth is to stimulate the liver and other tissues to secrete IGF1. It stimulates both the differentiation and proliferation of myoblasts. It also stimulates amino acid uptake and protein synthesis in muscle and other tissues. This chain is Somatotropin (GH1), found in Neovison vison (American mink).